The following is a 412-amino-acid chain: Argininosuccinate synthase (412 aa).

An ATP-binding site is contributed by A10 to S18. Position 89 (Y89) interacts with L-citrulline. G119 is a binding site for ATP. L-aspartate contacts are provided by T121, N125, and D126. N125 contacts L-citrulline. Residues R129, S177, E261, and Y273 each contribute to the L-citrulline site.

Belongs to the argininosuccinate synthase family. Type 1 subfamily. In terms of assembly, homotetramer.

It localises to the cytoplasm. It catalyses the reaction L-citrulline + L-aspartate + ATP = 2-(N(omega)-L-arginino)succinate + AMP + diphosphate + H(+). The protein operates within amino-acid biosynthesis; L-arginine biosynthesis; L-arginine from L-ornithine and carbamoyl phosphate: step 2/3. The polypeptide is Argininosuccinate synthase (Bifidobacterium longum (strain NCC 2705)).